Consider the following 133-residue polypeptide: Ribosome-binding factor A (133 aa).

It belongs to the RbfA family. As to quaternary structure, monomer. Binds 30S ribosomal subunits, but not 50S ribosomal subunits or 70S ribosomes.

The protein localises to the cytoplasm. Its function is as follows. One of several proteins that assist in the late maturation steps of the functional core of the 30S ribosomal subunit. Associates with free 30S ribosomal subunits (but not with 30S subunits that are part of 70S ribosomes or polysomes). Required for efficient processing of 16S rRNA. May interact with the 5'-terminal helix region of 16S rRNA. This is Ribosome-binding factor A from Acinetobacter baumannii (strain ACICU).